We begin with the raw amino-acid sequence, 318 residues long: Ubiquitin-like domain-containing CTD phosphatase 1 (318 aa).

An N-acetylalanine modification is found at A2. Positions 3–81 constitute a Ubiquitin-like domain; it reads LPIIVKWGGQ…IMMMGTREES (79 aa). Position 117 is an N6-acetyllysine (K117). Positions 133–294 constitute an FCP1 homology domain; it reads PREGKKLLVL…LKLTQYLKEI (162 aa). D143, D145, and D253 together coordinate Mg(2+).

Mg(2+) is required as a cofactor.

The protein localises to the nucleus. It catalyses the reaction O-phospho-L-seryl-[protein] + H2O = L-seryl-[protein] + phosphate. The catalysed reaction is O-phospho-L-threonyl-[protein] + H2O = L-threonyl-[protein] + phosphate. Functionally, dephosphorylates 26S nuclear proteasomes, thereby decreasing their proteolytic activity. Recruited to the 19S regulatory particle of the 26S proteasome through its interaction with 19S component PSMD2/RPN1. Once recruited, dephosphorylates 19S component PSMC2/RPT1 which impairs PSMC2 ATPase activity and disrupts 26S proteasome assembly. Has also been reported to stimulate the proteolytic activity of the 26S proteasome. The sequence is that of Ubiquitin-like domain-containing CTD phosphatase 1 (UBLCP1) from Bos taurus (Bovine).